Consider the following 549-residue polypeptide: Glucose-6-phosphate isomerase (549 aa).

N6-acetyllysine occurs at positions 80, 228, and 234. The active-site Proton donor is the Glu355. Active-site residues include His386 and Lys514.

The protein belongs to the GPI family.

It localises to the cytoplasm. It carries out the reaction alpha-D-glucose 6-phosphate = beta-D-fructose 6-phosphate. It functions in the pathway carbohydrate biosynthesis; gluconeogenesis. Its pathway is carbohydrate degradation; glycolysis; D-glyceraldehyde 3-phosphate and glycerone phosphate from D-glucose: step 2/4. Its function is as follows. Catalyzes the reversible isomerization of glucose-6-phosphate to fructose-6-phosphate. This is Glucose-6-phosphate isomerase from Escherichia coli O127:H6 (strain E2348/69 / EPEC).